A 107-amino-acid chain; its full sequence is MARFTLHDLAATVDARAASGGESSYTKKLLDKGPEHCAKKFGEEAVEMVIAAVENDRGHLISETADVLFHMLVLLKSRGVKLEEVEAALAQRTSMSGLEEKASRKRD.

Belongs to the PRA-PH family.

It localises to the cytoplasm. It carries out the reaction 1-(5-phospho-beta-D-ribosyl)-ATP + H2O = 1-(5-phospho-beta-D-ribosyl)-5'-AMP + diphosphate + H(+). It participates in amino-acid biosynthesis; L-histidine biosynthesis; L-histidine from 5-phospho-alpha-D-ribose 1-diphosphate: step 2/9. This is Phosphoribosyl-ATP pyrophosphatase 1 (hisE1) from Rhodopseudomonas palustris (strain ATCC BAA-98 / CGA009).